The sequence spans 369 residues: Glutamate 5-kinase (369 aa).

Residue Lys9 participates in ATP binding. Substrate-binding residues include Ser49, Asp136, and Asn148. Residues 168–169 and 210–216 each bind ATP; these read TD and TGGMLTK. Residues 275–355 form the PUA domain; that stretch reads RGSVYVDEGA…KGVFIHRDDW (81 aa).

It belongs to the glutamate 5-kinase family.

The protein localises to the cytoplasm. It catalyses the reaction L-glutamate + ATP = L-glutamyl 5-phosphate + ADP. It participates in amino-acid biosynthesis; L-proline biosynthesis; L-glutamate 5-semialdehyde from L-glutamate: step 1/2. In terms of biological role, catalyzes the transfer of a phosphate group to glutamate to form L-glutamate 5-phosphate. This is Glutamate 5-kinase from Neisseria meningitidis serogroup B (strain ATCC BAA-335 / MC58).